The primary structure comprises 210 residues: Adenylate kinase (210 aa).

Residue 10-15 coordinates ATP; that stretch reads GSGKGT. Residues 30-59 are NMP; it reads STGDLFRANISNATPLGKEIKQIVENGQLV. AMP is bound by residues threonine 31, arginine 36, 57–59, 85–88, and glutamine 92; these read QLV and GFPR. Positions 121–158 are LID; it reads GRRICQSCGGIFNIYTLPTKEKGICDLCKGSLYQRKDD. Arginine 122 lines the ATP pocket. Residues cysteine 125 and cysteine 128 each contribute to the Zn(2+) site. An ATP-binding site is contributed by 131–132; that stretch reads IF. Residues cysteine 145 and cysteine 148 each coordinate Zn(2+). 2 residues coordinate AMP: arginine 155 and arginine 166. Lysine 194 lines the ATP pocket.

Belongs to the adenylate kinase family. Monomer.

The protein resides in the cytoplasm. It carries out the reaction AMP + ATP = 2 ADP. The protein operates within purine metabolism; AMP biosynthesis via salvage pathway; AMP from ADP: step 1/1. Functionally, catalyzes the reversible transfer of the terminal phosphate group between ATP and AMP. Plays an important role in cellular energy homeostasis and in adenine nucleotide metabolism. The protein is Adenylate kinase of Borrelia turicatae (strain 91E135).